The chain runs to 408 residues: tRNA-specific 2-thiouridylase MnmA (408 aa).

ATP is bound by residues 27 to 34 and L53; that span reads AMSGGVDS. C121 acts as the Nucleophile in catalysis. An intrachain disulfide couples C121 to C222. Residue G145 participates in ATP binding. Residues 172–174 form an interaction with tRNA region; that stretch reads RDQ. C222 serves as the catalytic Cysteine persulfide intermediate.

The protein belongs to the MnmA/TRMU family.

Its subcellular location is the cytoplasm. It catalyses the reaction S-sulfanyl-L-cysteinyl-[protein] + uridine(34) in tRNA + AH2 + ATP = 2-thiouridine(34) in tRNA + L-cysteinyl-[protein] + A + AMP + diphosphate + H(+). Functionally, catalyzes the 2-thiolation of uridine at the wobble position (U34) of tRNA, leading to the formation of s(2)U34. This Rhizobium etli (strain ATCC 51251 / DSM 11541 / JCM 21823 / NBRC 15573 / CFN 42) protein is tRNA-specific 2-thiouridylase MnmA.